Consider the following 620-residue polypeptide: 1-deoxy-D-xylulose-5-phosphate synthase (620 aa).

Thiamine diphosphate is bound by residues histidine 80 and glycine 121–serine 123. Aspartate 152 is a Mg(2+) binding site. Residues glycine 153 to alanine 154, asparagine 181, tyrosine 288, and glutamate 370 each bind thiamine diphosphate. Asparagine 181 provides a ligand contact to Mg(2+).

It belongs to the transketolase family. DXPS subfamily. Homodimer. It depends on Mg(2+) as a cofactor. The cofactor is thiamine diphosphate.

The catalysed reaction is D-glyceraldehyde 3-phosphate + pyruvate + H(+) = 1-deoxy-D-xylulose 5-phosphate + CO2. Its pathway is metabolic intermediate biosynthesis; 1-deoxy-D-xylulose 5-phosphate biosynthesis; 1-deoxy-D-xylulose 5-phosphate from D-glyceraldehyde 3-phosphate and pyruvate: step 1/1. Catalyzes the acyloin condensation reaction between C atoms 2 and 3 of pyruvate and glyceraldehyde 3-phosphate to yield 1-deoxy-D-xylulose-5-phosphate (DXP). The chain is 1-deoxy-D-xylulose-5-phosphate synthase from Escherichia fergusonii (strain ATCC 35469 / DSM 13698 / CCUG 18766 / IAM 14443 / JCM 21226 / LMG 7866 / NBRC 102419 / NCTC 12128 / CDC 0568-73).